The following is a 293-amino-acid chain: Ribosomal protein L11 methyltransferase (293 aa).

Threonine 145, glycine 166, aspartate 188, and asparagine 230 together coordinate S-adenosyl-L-methionine.

This sequence belongs to the methyltransferase superfamily. PrmA family.

Its subcellular location is the cytoplasm. It carries out the reaction L-lysyl-[protein] + 3 S-adenosyl-L-methionine = N(6),N(6),N(6)-trimethyl-L-lysyl-[protein] + 3 S-adenosyl-L-homocysteine + 3 H(+). Methylates ribosomal protein L11. In Enterobacter sp. (strain 638), this protein is Ribosomal protein L11 methyltransferase.